The following is a 105-amino-acid chain: Guanidinium exporter (105 aa).

Residue Met1 is a topological domain, cytoplasmic. Residues Ser2–Gly19 traverse the membrane as a helical segment. The Periplasmic portion of the chain corresponds to Leu20–Arg28. Residues Leu29 to Trp48 form a helical membrane-spanning segment. Over Ala49 to Pro54 the chain is Cytoplasmic. The helical transmembrane segment at Val55 to Leu77 threads the bilayer. Residues Leu78 to Arg86 are Periplasmic-facing. Residues Leu87 to Thr104 traverse the membrane as a helical segment. Position 105 (His105) is a topological domain, cytoplasmic.

The protein belongs to the drug/metabolite transporter (DMT) superfamily. Small multidrug resistance (SMR) (TC 2.A.7.1) family. Gdx/SugE subfamily.

It localises to the cell inner membrane. Functionally, guanidinium ion exporter. Couples guanidinium export to the proton motive force, exchanging one guanidinium ion for two protons. The sequence is that of Guanidinium exporter from Citrobacter freundii.